The sequence spans 339 residues: SVP1-like protein 2 (339 aa).

WD repeat units lie at residues 177–217 (AHAN…LVRE) and 222–261 (LDRT…ENKR).

The protein belongs to the WD repeat PROPPIN family.

The protein localises to the vacuole membrane. The protein resides in the cytoplasmic vesicle membrane. Its function is as follows. Involved in mitochondrial or peroxisomal functions and amino acid signaling pathways. The sequence is that of SVP1-like protein 2 (HSV2) from Kluyveromyces lactis (strain ATCC 8585 / CBS 2359 / DSM 70799 / NBRC 1267 / NRRL Y-1140 / WM37) (Yeast).